The following is a 352-amino-acid chain: Probable protein kinase DDB_G0291842 (352 aa).

The segment at 1-57 (MRPLPDQSAFEDKSELVSKKQKNEDENNENRSPETPRTPKVCPKTPTKTPLRTPTKN) is disordered. A compositionally biased stretch (basic and acidic residues) spans 10–34 (FEDKSELVSKKQKNEDENNENRSPE). Residues 38 to 56 (TPKVCPKTPTKTPLRTPTK) are compositionally biased toward low complexity. Residues 77 to 331 (FEYINQIGEG…IQSLLKYDKL (255 aa)) form the Protein kinase domain. ATP is bound by residues 83–91 (IGEGSFAKV) and Lys106. Residue Asp207 is the Proton acceptor of the active site. Positions 212 and 225 each coordinate Mg(2+).

This sequence belongs to the protein kinase superfamily. Ser/Thr protein kinase family. WEE1 subfamily.

It carries out the reaction L-seryl-[protein] + ATP = O-phospho-L-seryl-[protein] + ADP + H(+). The enzyme catalyses L-threonyl-[protein] + ATP = O-phospho-L-threonyl-[protein] + ADP + H(+). The polypeptide is Probable protein kinase DDB_G0291842 (Dictyostelium discoideum (Social amoeba)).